Consider the following 294-residue polypeptide: Protoheme IX farnesyltransferase (294 aa).

9 consecutive transmembrane segments (helical) span residues 13 to 33 (IIFG…KGVI), 35 to 55 (YPLF…GCVF), 84 to 104 (ISLI…YAAA), 107 to 127 (LAMQ…SLYM), 132 to 152 (VYGT…GYCA), 162 to 182 (LILL…IAIF), 208 to 228 (IILY…SGYA), 229 to 249 (GYKY…MALS), and 264 to 284 (FIFS…DPHV).

This sequence belongs to the UbiA prenyltransferase family. Protoheme IX farnesyltransferase subfamily.

Its subcellular location is the cell inner membrane. The catalysed reaction is heme b + (2E,6E)-farnesyl diphosphate + H2O = Fe(II)-heme o + diphosphate. It functions in the pathway porphyrin-containing compound metabolism; heme O biosynthesis; heme O from protoheme: step 1/1. Functionally, converts heme B (protoheme IX) to heme O by substitution of the vinyl group on carbon 2 of heme B porphyrin ring with a hydroxyethyl farnesyl side group. The sequence is that of Protoheme IX farnesyltransferase from Photorhabdus laumondii subsp. laumondii (strain DSM 15139 / CIP 105565 / TT01) (Photorhabdus luminescens subsp. laumondii).